A 491-amino-acid chain; its full sequence is uncharacterized protein (491 aa).

Position 267–274 (267–274 (GIQGTGKS)) interacts with ATP.

It belongs to the AAA ATPase family. Highly divergent.

It is found in the plastid. The protein resides in the chloroplast. This is an uncharacterized protein from Gracilaria tenuistipitata var. liui (Red alga).